The sequence spans 205 residues: tRNA 2-(methylsulfanyl)-N(6)-isopentenyladenosine(37) hydroxylase (205 aa).

Fe cation-binding residues include glutamate 38, glutamate 69, histidine 72, glutamate 122, glutamate 151, and histidine 154.

This sequence belongs to the MiaE family. As to quaternary structure, homodimer. The cofactor is Fe cation.

The catalysed reaction is 2-methylsulfanyl-N(6)-dimethylallyladenosine(37) in tRNA + AH2 + O2 = N(6)-[(2E)-4-hydroxy-3-methylbut-2-en-1-yl]-2-(methylsulfanyl)adenosine(37) in tRNA + A + H2O. Its pathway is tRNA modification; 2-methylthio-N-6-(cis-hydroxy)isopentenyl adenosine-tRNA biosynthesis. Functionally, involved in specific tRNA modification. Catalyzes the oxygen-dependent hydroxylation of 2-methylthio-N-6-isopentenyl adenosine (ms2i6A) to produce 2-methylthio-N-6-(cis-hydroxy)isopentenyl adenosine (ms2io6A) at position 37 in tRNAs. This is tRNA 2-(methylsulfanyl)-N(6)-isopentenyladenosine(37) hydroxylase from Pseudomonas putida (strain ATCC 47054 / DSM 6125 / CFBP 8728 / NCIMB 11950 / KT2440).